We begin with the raw amino-acid sequence, 338 residues long: Heat-inducible transcription repressor HrcA (338 aa).

The protein belongs to the HrcA family.

Negative regulator of class I heat shock genes (grpE-dnaK-dnaJ and groELS operons). Prevents heat-shock induction of these operons. This is Heat-inducible transcription repressor HrcA from Bacillus cereus (strain AH187).